A 697-amino-acid polypeptide reads, in one-letter code: SPX domain-containing membrane protein At1g63010 (697 aa).

The SPX domain occupies Val2–Lys145. 6 consecutive transmembrane segments (helical) span residues Phe247–Ile267, Leu278–Phe298, Leu315–Ala335, Ser337–Val356, Ala375–Leu395, and Leu411–Phe431. The segment at Glu439–Val459 is disordered. Transmembrane regions (helical) follow at residues Leu513–Ile533, Ser544–Gly564, Ile576–Val596, Val604–Leu624, and Leu670–Cys690.

The protein belongs to the major facilitator superfamily.

The protein localises to the membrane. The polypeptide is SPX domain-containing membrane protein At1g63010 (Arabidopsis thaliana (Mouse-ear cress)).